Reading from the N-terminus, the 1231-residue chain is Cohesin subunit SA-2 (1231 aa).

An N-acetylmethionine modification is found at M1. The tract at residues 1-75 (MIAAPEIPTD…GPNRMNGHHQ (75 aa)) is disordered. Residues 36 to 48 (KQGKGKTCKKGKK) show a composition bias toward basic residues. Residues 293 to 378 (FVHRYRDAIA…SRFKDRIVSM (86 aa)) enclose the SCD domain. K607 is subject to N6-acetyllysine. A phosphoserine mark is found at S1058, S1061, S1064, and S1065. Residues 1064-1083 (SSRGSTVRSKKSKPSTGKRK) form a disordered region. A compositionally biased stretch (basic residues) spans 1071–1082 (RSKKSKPSTGKR). T1112 is modified (phosphothreonine). S1177 and S1178 each carry phosphoserine.

This sequence belongs to the SCC3 family. Interacts directly with RAD21 in cohesin complex. Cohesin complexes are composed of a heterodimer between a SMC1 protein (SMC1A or SMC1B) and SMC3, which are attached via their hinge domain, and RAD21 which link them at their heads, and one STAG protein (STAG1, STAG2 or STAG3). In cohesin complexes, STAG2 is mutually exclusive with STAG1 and STAG3. Phosphorylated by PLK1. The large dissociation of cohesin from chromosome arms during prophase is partly due to its phosphorylation.

It localises to the nucleus. It is found in the chromosome. Its subcellular location is the centromere. In terms of biological role, component of cohesin complex, a complex required for the cohesion of sister chromatids after DNA replication. The cohesin complex apparently forms a large proteinaceous ring within which sister chromatids can be trapped. At anaphase, the complex is cleaved and dissociates from chromatin, allowing sister chromatids to segregate. The cohesin complex may also play a role in spindle pole assembly during mitosis. The sequence is that of Cohesin subunit SA-2 (STAG2) from Homo sapiens (Human).